The sequence spans 89 residues: Small ribosomal subunit protein uS14A (89 aa).

Belongs to the universal ribosomal protein uS14 family. As to quaternary structure, part of the 30S ribosomal subunit. Contacts proteins S3 and S10.

Functionally, binds 16S rRNA, required for the assembly of 30S particles and may also be responsible for determining the conformation of the 16S rRNA at the A site. In Lactiplantibacillus plantarum (strain ATCC BAA-793 / NCIMB 8826 / WCFS1) (Lactobacillus plantarum), this protein is Small ribosomal subunit protein uS14A.